A 403-amino-acid polypeptide reads, in one-letter code: L-alanine/L-glutamate racemase (403 aa).

Residues 62–64 (YSN), 92–93 (GL), and 209–211 (AVT) contribute to the pyridoxal 5'-phosphate site. Lys212 carries the post-translational modification N6-(pyridoxal phosphate)lysine.

The protein belongs to the trans-sulfuration enzymes family. In terms of assembly, homotetramer; dimer of active dimers. The cofactor is pyridoxal 5'-phosphate.

It carries out the reaction L-alanine = D-alanine. The enzyme catalyses L-glutamate = D-glutamate. It catalyses the reaction L,L-cystathionine + H2O = L-homocysteine + pyruvate + NH4(+). Its pathway is cell wall biogenesis; peptidoglycan biosynthesis. In terms of biological role, catalyzes the racemization of L-alanine to D-alanine, and of L-glutamate to D-glutamate. The activity is low, but likely physiological since W.pipientis wMel lacks canonical alr and murI genes, while D-alanine and D-glutamate are essential components of peptidoglycan. Also displays a vestigial cystathionine beta-lyase (CBL) activity, cleaving cystathionine to homocysteine and pyruvate; however, this reaction seems not to be physiologically relevant since the only met gene in the genome of this obligately intracellular parasitic bacterium is metC, demonstrating that it is a methionine auxotroph. This is L-alanine/L-glutamate racemase from Wolbachia pipientis wMel.